The chain runs to 500 residues: tRNA (guanine(37)-N(1))-methyltransferase (500 aa).

Residues histidine 215, 253 to 254 (DL), 281 to 282 (DA), and asparagine 312 contribute to the S-adenosyl-L-methionine site. Residues 463-500 (QIVAKKTPKPAPRPLPAKNKTTPDTNKMETDLTKLEMK) form a disordered region. The span at 488 to 500 (NKMETDLTKLEMK) shows a compositional bias: basic and acidic residues.

This sequence belongs to the class I-like SAM-binding methyltransferase superfamily. TRM5/TYW2 family. As to quaternary structure, monomer.

The protein resides in the mitochondrion matrix. The protein localises to the nucleus. It is found in the cytoplasm. The enzyme catalyses guanosine(37) in tRNA + S-adenosyl-L-methionine = N(1)-methylguanosine(37) in tRNA + S-adenosyl-L-homocysteine + H(+). Its function is as follows. Specifically methylates the N1 position of guanosine-37 in various cytoplasmic and mitochondrial tRNAs. Methylation is not dependent on the nature of the nucleoside 5' of the target nucleoside. This is the first step in the biosynthesis of wybutosine (yW), a modified base adjacent to the anticodon of tRNAs and required for accurate decoding. The sequence is that of tRNA (guanine(37)-N(1))-methyltransferase from Anopheles darlingi (Mosquito).